Consider the following 240-residue polypeptide: MGLEVAADSVASALAAQAGGAMRVELCGGLDGGGLTPSFGTLAVVRERLRIPLYVLIRPRVGDFVFDAAEVEVMRRDVEQCVRLGCDGVVLGALDRHGQVDLATMRVLMQAAGSLGVTFHRAIDVSADPSRVLEDAIALGCERVLTSGARASALEGIDTIAALVRQAAGRIGIMPGAGLSEHNIRALRQHTGAHEFHASARGVIAAQVPSPHPYIRDLGGDYQRTDTARVQRMVDALQQA.

The protein belongs to the CutC family.

The protein localises to the cytoplasm. The polypeptide is PF03932 family protein CutC (Xanthomonas axonopodis pv. citri (strain 306)).